A 443-amino-acid polypeptide reads, in one-letter code: Chromosome partition protein MukF (443 aa).

The interval 209–237 (LDETSGNLRELQDTLNAAGDKLQAQLLRI) is leucine-zipper.

This sequence belongs to the MukF family. In terms of assembly, interacts, and probably forms a ternary complex, with MukE and MukB via its C-terminal region. The complex formation is stimulated by calcium or magnesium. It is required for an interaction between MukE and MukB.

The protein resides in the cytoplasm. It localises to the nucleoid. Involved in chromosome condensation, segregation and cell cycle progression. May participate in facilitating chromosome segregation by condensation DNA from both sides of a centrally located replisome during cell division. Not required for mini-F plasmid partitioning. Probably acts via its interaction with MukB and MukE. Overexpression results in anucleate cells. It has a calcium binding activity. The protein is Chromosome partition protein MukF of Actinobacillus pleuropneumoniae serotype 7 (strain AP76).